The sequence spans 296 residues: Claudin-23 (296 aa).

The Cytoplasmic portion of the chain corresponds to 1–2 (MR). The helical transmembrane segment at 3–23 (TPVVMTLGMVLTPCGLLLNLV) threads the bilayer. The Extracellular portion of the chain corresponds to 24-81 (STLAPGWRLVKGFLDQPVDVVLYQGLWDICREQSSRERECGQPDEWNYFQTQPVQVAR). A helical transmembrane segment spans residues 82 to 102 (GLMITSLATTALGLLLASLGV). The Cytoplasmic segment spans residues 103–111 (RCWQDEPHY). The helical transmembrane segment at 112–132 (GLAGLSGVVFFVAGLFSLIPV) threads the bilayer. Topologically, residues 133 to 160 (SWYNHFLSDPDVLAAPSSPVTVQVSYSL) are extracellular. A helical membrane pass occupies residues 161 to 181 (VLGYLGSCLLLLGGFSLALSF). The Cytoplasmic portion of the chain corresponds to 182–296 (APWCEERCRR…QNSLPCDSDL (115 aa)). A disordered region spans residues 224 to 296 (YSDGQHRPPP…QNSLPCDSDL (73 aa)). Over residues 273–284 (TSQGGSSSRSTR) the composition is skewed to low complexity. The span at 285-296 (PCQNSLPCDSDL) shows a compositional bias: polar residues.

Belongs to the claudin family.

The protein resides in the cell junction. It localises to the tight junction. It is found in the cell membrane. Plays a major role in tight junction-specific obliteration of the intercellular space, through calcium-independent cell-adhesion activity. The sequence is that of Claudin-23 (Cldn23) from Mus musculus (Mouse).